The sequence spans 109 residues: uncharacterized protein (109 aa).

A signal peptide spans 1 to 25 (MKGIFLVVQLGFSIMVFLFLAAVNW). The helical transmembrane segment at 73–95 (YPVMSALMIISFLYVLAALFLLI) threads the bilayer.

Its subcellular location is the membrane. This is an uncharacterized protein from Bacillus subtilis (strain 168).